A 471-amino-acid chain; its full sequence is Plant intracellular Ras-group-related LRR protein 2 (471 aa).

A coiled-coil region spans residues 106–133 (VVRLDEVHDSYEKKLKDTEEELSRVYST). LRR repeat units follow at residues 159-182 (GGTV…FWKV), 183-205 (VGLV…ISKL), 206-229 (KKLE…GMLL), 231-251 (LRIL…IAHC), 253-275 (SLVE…GYGL), 276-298 (QNLE…ISEM), 300-321 (NLKY…IGRL), 324-346 (LEVL…ITDL), 347-369 (TNLR…FYRL), and 371-392 (KLEK…VATQ). Residues 393 to 405 (GAEVVREFMRKRW) carry the GVYW; degenerate motif.

This sequence belongs to the SHOC2 family. Widely expressed but preferentially in roots.

Leucine-rich repeat protein that likely mediates protein interactions, possibly in the context of signal transduction. This is Plant intracellular Ras-group-related LRR protein 2 (PIRL2) from Arabidopsis thaliana (Mouse-ear cress).